The chain runs to 83 residues: Small ribosomal subunit protein bS16 (83 aa).

It belongs to the bacterial ribosomal protein bS16 family.

This is Small ribosomal subunit protein bS16 from Azoarcus sp. (strain BH72).